We begin with the raw amino-acid sequence, 423 residues long: Histidine--tRNA ligase (423 aa).

It belongs to the class-II aminoacyl-tRNA synthetase family. As to quaternary structure, homodimer.

It localises to the cytoplasm. The enzyme catalyses tRNA(His) + L-histidine + ATP = L-histidyl-tRNA(His) + AMP + diphosphate + H(+). The chain is Histidine--tRNA ligase from Corynebacterium diphtheriae (strain ATCC 700971 / NCTC 13129 / Biotype gravis).